Here is a 410-residue protein sequence, read N- to C-terminus: Squalene synthase 1 (410 aa).

G2 is modified (N-acetylglycine). Transmembrane regions (helical) follow at residues 283-303 and 387-407; these read SIFRFCAIPQIMAIGTLALCY and QPNSVFIIMVVILLAIVFAYL.

The protein belongs to the phytoene/squalene synthase family. The cofactor is Mg(2+). Mn(2+) is required as a cofactor. As to expression, expressed in all tissues analyzed (seedlings, cotyledons, inflorescences, siliques, leaves, stems and roots). Highly expressed in roots and pollen.

The protein resides in the endoplasmic reticulum membrane. The catalysed reaction is 2 (2E,6E)-farnesyl diphosphate + NADPH + H(+) = squalene + 2 diphosphate + NADP(+). It carries out the reaction 2 (2E,6E)-farnesyl diphosphate + NADH + H(+) = squalene + 2 diphosphate + NAD(+). It participates in terpene metabolism; lanosterol biosynthesis; lanosterol from farnesyl diphosphate: step 1/3. This chain is Squalene synthase 1, found in Arabidopsis thaliana (Mouse-ear cress).